The chain runs to 687 residues: ERI1 exoribonuclease 2 (687 aa).

One can recognise an Exonuclease domain in the interval 38-226; it reads LIIIDFESTC…DDSRNTAKLA (189 aa). Positions 42, 44, and 156 each coordinate Mg(2+). Catalysis depends on Glu-44, which acts as the Proton acceptor. Glu-44 contributes to the AMP binding site. The Proton acceptor role is filled by His-213. His-213 is an AMP binding site. Asp-218 contributes to the Mg(2+) binding site. Zn(2+) contacts are provided by Cys-595, Cys-597, Cys-620, and Cys-633. Residues 595 to 642 form a GRF-type zinc finger; sequence CNCGRRAKRLTVSNAGPNQGKAFYTCSVKKRNEENKKGCDYFKWEQTV.

The protein belongs to the ERI2 family. Requires Mg(2+) as cofactor.

The chain is ERI1 exoribonuclease 2 (eri2) from Xenopus laevis (African clawed frog).